We begin with the raw amino-acid sequence, 316 residues long: Transaldolase 2 (316 aa).

The active-site Schiff-base intermediate with substrate is the Lys131.

The protein belongs to the transaldolase family. Type 1 subfamily. In terms of assembly, homodimer.

It is found in the cytoplasm. It catalyses the reaction D-sedoheptulose 7-phosphate + D-glyceraldehyde 3-phosphate = D-erythrose 4-phosphate + beta-D-fructose 6-phosphate. Its pathway is carbohydrate degradation; pentose phosphate pathway; D-glyceraldehyde 3-phosphate and beta-D-fructose 6-phosphate from D-ribose 5-phosphate and D-xylulose 5-phosphate (non-oxidative stage): step 2/3. In terms of biological role, transaldolase is important for the balance of metabolites in the pentose-phosphate pathway. The polypeptide is Transaldolase 2 (Salmonella choleraesuis (strain SC-B67)).